A 1863-amino-acid polypeptide reads, in one-letter code: Breast cancer type 1 susceptibility protein homolog (1863 aa).

N-acetylmethionine is present on Met1. The segment at Cys24–Lys65 adopts an RING-type zinc-finger fold. Lys109 is covalently cross-linked (Glycyl lysine isopeptide (Lys-Gly) (interchain with G-Cter in SUMO2)). Position 114 is a phosphoserine (Ser114). Composition is skewed to basic and acidic residues over residues Lys231–Gln240 and Thr248–Lys260. Residues Lys231 to Val266 form a disordered region. Lys300 participates in a covalent cross-link: Glycyl lysine isopeptide (Lys-Gly) (interchain with G-Cter in SUMO2). Residues Asn305–Glu336 are disordered. Polar residues predominate over residues Asn318–Ser334. Lys338 is covalently cross-linked (Glycyl lysine isopeptide (Lys-Gly) (interchain with G-Cter in SUMO2)). Phosphoserine is present on residues Ser394, Ser397, Ser422, and Ser433. Residues Lys442, Lys458, and Lys518 each participate in a glycyl lysine isopeptide (Lys-Gly) (interchain with G-Cter in SUMO2) cross-link. Residue Ser550 is modified to Phosphoserine. Lys582 is covalently cross-linked (Glycyl lysine isopeptide (Lys-Gly) (interchain with G-Cter in SUMO2)). Residues Asn653–Leu699 are disordered. Phosphoserine is present on residues Ser693, Ser707, and Ser724. Residues Lys733 and Lys738 each participate in a glycyl lysine isopeptide (Lys-Gly) (interchain with G-Cter in SUMO2) cross-link. 2 positions are modified to phosphoserine: Ser752 and Ser839. A disordered region spans residues Ala886–Ser914. A compositionally biased stretch (basic and acidic residues) spans Ser900–Ser914. Glycyl lysine isopeptide (Lys-Gly) (interchain with G-Cter in SUMO2) cross-links involve residues Lys917 and Lys986. Position 987 is a phosphoserine; by CHEK2 (Ser987). Ser1008 bears the Phosphoserine mark. The segment covering Ser1042 to Asn1059 has biased composition (polar residues). The interval Ser1042–Gly1062 is disordered. Lys1079 is covalently cross-linked (Glycyl lysine isopeptide (Lys-Gly) (interchain with G-Cter in SUMO2)). Phosphoserine is present on residues Ser1143, Ser1189, Ser1191, Ser1211, Ser1217, Ser1218, Ser1280, Ser1328, Ser1336, Ser1342, and Ser1387. The interval Arg1323–Arg1397 is disordered. Acidic residues predominate over residues Ser1342 to Ser1360. Residues Glu1373–Arg1397 are compositionally biased toward polar residues. A Phosphothreonine modification is found at Thr1394. An interaction with PALB2 region spans residues Arg1397 to Gln1424. Phosphoserine occurs at positions 1423, 1457, 1524, and 1542. Residues Leu1442–Cys1501 are disordered. Over residues Pro1445–Glu1470 the composition is skewed to polar residues. Positions Glu1540 to His1618 are disordered. Residues Val1607–His1618 show a composition bias toward polar residues. BRCT domains are found at residues Ser1642–Val1736 and Pro1756–Ile1855.

As to quaternary structure, heterodimer with BARD1. Part of the BRCA1-associated genome surveillance complex (BASC), which contains BRCA1, MSH2, MSH6, MLH1, ATM, BLM, PMS2 and the MRE11-RAD50-NBN protein (MRN) complex. This association could be a dynamic process changing throughout the cell cycle and within subnuclear domains. Component of the BRCA1-A complex, at least composed of BRCA1, BARD1, UIMC1/RAP80, ABRAXAS1, BRCC3/BRCC36, BABAM2 and BABAM1/NBA1. Interacts (via the BRCT domains) with ABRAXAS1 (phosphorylated form); this is important for recruitment to sites of DNA damage. Can form a heterotetramer with two molecules of ABRAXAS1 (phosphorylated form). Component of the BRCA1-RBBP8 complex. Interacts (via the BRCT domains) with RBBP8 ('Ser-327' phosphorylated form); the interaction ubiquitinates RBBP8, regulates CHEK1 activation, and involves RBBP8 in BRCA1-dependent G2/M checkpoint control on DNA damage. Associates with RNA polymerase II holoenzyme. Interacts with SMC1A, NELFB, DCLRE1C, CLSPN. CHEK1, CHEK2, BAP1, BRCC3, UBXN1 and PCLAF. Interacts (via BRCT domains) with BRIP1 (phosphorylated form). Interacts with FANCD2 (ubiquitinated form). Interacts with H2AX (phosphorylated on 'Ser-140'). Interacts (via the BRCT domains) with ACACA (phosphorylated form); the interaction prevents dephosphorylation of ACACA. Part of a BRCA complex containing BRCA1, BRCA2 and PALB2. Interacts directly with PALB2; the interaction is essential for its function in HRR. Interacts directly with BRCA2; the interaction occurs only in the presence of PALB2 which serves as the bridging protein. Interacts (via the BRCT domains) with LMO4; the interaction represses the transcriptional activity of BRCA1. Interacts (via the BRCT domains) with CCAR2 (via N-terminus); the interaction represses the transcriptional activator activity of BRCA1. Interacts with EXD2. Interacts (via C-terminus) with DHX9; this interaction is direct and links BRCA1 to the RNA polymerase II holoenzyme. Interacts with DNA helicase ZGRF1; the interaction is increased following DNA damage induction. In terms of processing, phosphorylated in response to IR, UV, and various stimuli that cause checkpoint activation, probably by ATM or ATR. Phosphorylation at Ser-987 by CHEK2 regulates mitotic spindle assembly. Phosphorylation by AURKA regulates centrosomal microtubule nucleation. Autoubiquitinated, undergoes 'Lys-6'-linked polyubiquitination. 'Lys-6'-linked polyubiquitination does not promote degradation.

The protein localises to the nucleus. Its subcellular location is the chromosome. It is found in the cytoplasm. The catalysed reaction is S-ubiquitinyl-[E2 ubiquitin-conjugating enzyme]-L-cysteine + [acceptor protein]-L-lysine = [E2 ubiquitin-conjugating enzyme]-L-cysteine + N(6)-ubiquitinyl-[acceptor protein]-L-lysine.. It participates in protein modification; protein ubiquitination. In terms of biological role, E3 ubiquitin-protein ligase that specifically mediates the formation of 'Lys-6'-linked polyubiquitin chains and plays a central role in DNA repair by facilitating cellular responses to DNA damage. It is unclear whether it also mediates the formation of other types of polyubiquitin chains. The BRCA1-BARD1 heterodimer coordinates a diverse range of cellular pathways such as DNA damage repair, ubiquitination and transcriptional regulation to maintain genomic stability. Regulates centrosomal microtubule nucleation. Required for appropriate cell cycle arrests after ionizing irradiation in both the S-phase and the G2 phase of the cell cycle. Required for FANCD2 targeting to sites of DNA damage. Inhibits lipid synthesis by binding to inactive phosphorylated ACACA and preventing its dephosphorylation. Contributes to homologous recombination repair (HRR) via its direct interaction with PALB2, fine-tunes recombinational repair partly through its modulatory role in the PALB2-dependent loading of BRCA2-RAD51 repair machinery at DNA breaks. Component of the BRCA1-RBBP8 complex which regulates CHEK1 activation and controls cell cycle G2/M checkpoints on DNA damage via BRCA1-mediated ubiquitination of RBBP8. Acts as a transcriptional activator. In Macaca mulatta (Rhesus macaque), this protein is Breast cancer type 1 susceptibility protein homolog (BRCA1).